Here is a 147-residue protein sequence, read N- to C-terminus: MRTYSPKPGDADRQWHIIDATDVVLGRLASHTATLLRGKHKPTFAPHMDMGDYVIIVNAEKVALTGAKLEKKRAYRHSGYPGGLKSQSYAELLETNPVRAVEKAVKGMLPKNSLAAQQLSKLKVYKGAEHPHTAQQPQTFEIGQVAQ.

Belongs to the universal ribosomal protein uL13 family. In terms of assembly, part of the 50S ribosomal subunit.

Functionally, this protein is one of the early assembly proteins of the 50S ribosomal subunit, although it is not seen to bind rRNA by itself. It is important during the early stages of 50S assembly. The chain is Large ribosomal subunit protein uL13 from Micrococcus luteus (strain ATCC 4698 / DSM 20030 / JCM 1464 / CCM 169 / CCUG 5858 / IAM 1056 / NBRC 3333 / NCIMB 9278 / NCTC 2665 / VKM Ac-2230) (Micrococcus lysodeikticus).